The primary structure comprises 164 residues: Putative 4-hydroxy-4-methyl-2-oxoglutarate aldolase (164 aa).

Residues 80–83 (GGNL) and Arg-102 contribute to the substrate site. Residue Asp-103 coordinates a divalent metal cation.

Belongs to the class II aldolase/RraA-like family. In terms of assembly, homotrimer. Requires a divalent metal cation as cofactor.

The enzyme catalyses 4-hydroxy-4-methyl-2-oxoglutarate = 2 pyruvate. The catalysed reaction is oxaloacetate + H(+) = pyruvate + CO2. Catalyzes the aldol cleavage of 4-hydroxy-4-methyl-2-oxoglutarate (HMG) into 2 molecules of pyruvate. Also contains a secondary oxaloacetate (OAA) decarboxylase activity due to the common pyruvate enolate transition state formed following C-C bond cleavage in the retro-aldol and decarboxylation reactions. This chain is Putative 4-hydroxy-4-methyl-2-oxoglutarate aldolase, found in Burkholderia multivorans (strain ATCC 17616 / 249).